A 228-amino-acid chain; its full sequence is MATWANLGLQDSSSPLMEQLNFFHDHTLLILTMITILVGYIMGMLSFNKFTNRFLLHGQTIEIIWTVLPAIILMFIAFPSLRLLYLMDEINTPSITLKSIGHQWYWSYEYSDFLNLEFDSYMVPTNELETNGFRLLDVDNRVVLPMNNQIRILVTATDVLHSWTVPSLGVKVDATPGRLNQLNFLINRPGLFFGQCSEICGANHSFMPIVIESIPMNYFIKWITSMTN.

The Mitochondrial intermembrane portion of the chain corresponds to 1-26 (MATWANLGLQDSSSPLMEQLNFFHDH). Residues 27-48 (TLLILTMITILVGYIMGMLSFN) form a helical membrane-spanning segment. At 49–62 (KFTNRFLLHGQTIE) the chain is on the mitochondrial matrix side. The helical transmembrane segment at 63–82 (IIWTVLPAIILMFIAFPSLR) threads the bilayer. At 83–228 (LLYLMDEINT…FIKWITSMTN (146 aa)) the chain is on the mitochondrial intermembrane side. Residues His-161, Cys-196, Glu-198, Cys-200, His-204, and Met-207 each contribute to the Cu cation site. Glu-198 serves as a coordination point for Mg(2+).

The protein belongs to the cytochrome c oxidase subunit 2 family. In terms of assembly, component of the cytochrome c oxidase (complex IV, CIV), a multisubunit enzyme composed of a catalytic core of 3 subunits and several supernumerary subunits. The complex exists as a monomer or a dimer and forms supercomplexes (SCs) in the inner mitochondrial membrane with ubiquinol-cytochrome c oxidoreductase (cytochrome b-c1 complex, complex III, CIII). Cu cation serves as cofactor.

Its subcellular location is the mitochondrion inner membrane. The enzyme catalyses 4 Fe(II)-[cytochrome c] + O2 + 8 H(+)(in) = 4 Fe(III)-[cytochrome c] + 2 H2O + 4 H(+)(out). In terms of biological role, component of the cytochrome c oxidase, the last enzyme in the mitochondrial electron transport chain which drives oxidative phosphorylation. The respiratory chain contains 3 multisubunit complexes succinate dehydrogenase (complex II, CII), ubiquinol-cytochrome c oxidoreductase (cytochrome b-c1 complex, complex III, CIII) and cytochrome c oxidase (complex IV, CIV), that cooperate to transfer electrons derived from NADH and succinate to molecular oxygen, creating an electrochemical gradient over the inner membrane that drives transmembrane transport and the ATP synthase. Cytochrome c oxidase is the component of the respiratory chain that catalyzes the reduction of oxygen to water. Electrons originating from reduced cytochrome c in the intermembrane space (IMS) are transferred via the dinuclear copper A center (CU(A)) of subunit 2 and heme A of subunit 1 to the active site in subunit 1, a binuclear center (BNC) formed by heme A3 and copper B (CU(B)). The BNC reduces molecular oxygen to 2 water molecules using 4 electrons from cytochrome c in the IMS and 4 protons from the mitochondrial matrix. The protein is Cytochrome c oxidase subunit 2 (COII) of Anopheles gambiae (African malaria mosquito).